Consider the following 392-residue polypeptide: Digeranylgeranylglycerophospholipid reductase (392 aa).

Residues G15, E34, C45, A46, G48, R99, A123, D279, G291, and I292 each coordinate FAD. V370 is a binding site for a 2,3-bis-O-(geranylgeranyl)-sn-glycerol 1-phospholipid.

It belongs to the geranylgeranyl reductase family. DGGGPL reductase subfamily. FAD serves as cofactor.

The catalysed reaction is a 2,3-bis-O-phytanyl-sn-glycerol 1-phospholipid + 8 oxidized 2[4Fe-4S]-[ferredoxin] = a 2,3-bis-O-(geranylgeranyl)-sn-glycerol 1-phospholipid + 8 reduced 2[4Fe-4S]-[ferredoxin] + 16 H(+). It carries out the reaction 2,3-bis-O-(phytanyl)-sn-glycerol 1-phosphate + 8 oxidized 2[4Fe-4S]-[ferredoxin] = 2,3-bis-O-(geranylgeranyl)-sn-glycerol 1-phosphate + 8 reduced 2[4Fe-4S]-[ferredoxin] + 16 H(+). It catalyses the reaction a 2,3-bis-O-phytanyl-sn-glycerol 1-phospholipid + 8 A = a 2,3-bis-O-(geranylgeranyl)-sn-glycerol 1-phospholipid + 8 AH2. The enzyme catalyses CDP-2,3-bis-O-(geranylgeranyl)-sn-glycerol + 8 AH2 = CDP-2,3-bis-O-(phytanyl)-sn-glycerol + 8 A. The catalysed reaction is archaetidylserine + 8 AH2 = 2,3-bis-O-phytanyl-sn-glycero-3-phospho-L-serine + 8 A. Its pathway is membrane lipid metabolism; glycerophospholipid metabolism. Functionally, is involved in the reduction of 2,3-digeranylgeranylglycerophospholipids (unsaturated archaeols) into 2,3-diphytanylglycerophospholipids (saturated archaeols) in the biosynthesis of archaeal membrane lipids. Catalyzes the formation of archaetidic acid (2,3-di-O-phytanyl-sn-glyceryl phosphate) from 2,3-di-O-geranylgeranylglyceryl phosphate (DGGGP) via the hydrogenation of each double bond of the isoprenoid chains. Is also probably able to reduce double bonds of geranyl groups in CDP-2,3-bis-O-(geranylgeranyl)-sn-glycerol and archaetidylserine, thus acting at various stages in the biosynthesis of archaeal membrane lipids. In Methanocella arvoryzae (strain DSM 22066 / NBRC 105507 / MRE50), this protein is Digeranylgeranylglycerophospholipid reductase.